The chain runs to 504 residues: L-amino-acid oxidase (504 aa).

The first 18 residues, 1 to 18 (MNIFFMFSLLFLATLGSC), serve as a signal peptide directing secretion. Cys28 and Cys191 are oxidised to a cystine. FAD is bound by residues 61–62 (MS), 81–82 (EA), Arg89, and 105–108 (GPMR). Substrate is bound at residue Arg108. An N-linked (GlcNAc...) asparagine glycan is attached at Asn190. Position 241 (His241) interacts with substrate. FAD is bound at residue Val279. The cysteines at positions 349 and 430 are disulfide-linked. A glycan (N-linked (GlcNAc...) asparagine) is linked at Asn379. A substrate-binding site is contributed by Tyr390. Residues Glu475 and 482 to 487 (GWIDST) each bind FAD. Residue 482 to 483 (GW) coordinates substrate.

It belongs to the flavin monoamine oxidase family. FIG1 subfamily. Homodimer; non-covalently linked. FAD serves as cofactor. As to expression, expressed by the venom gland.

The protein localises to the secreted. It carries out the reaction an L-alpha-amino acid + O2 + H2O = a 2-oxocarboxylate + H2O2 + NH4(+). Functionally, catalyzes an oxidative deamination of predominantly hydrophobic and aromatic L-amino acids, thus producing hydrogen peroxide that may contribute to the diverse toxic effects of this enzyme. Exhibits diverse biological activities, such as hemorrhage, hemolysis, edema, apoptosis of vascular endothelial cells or tumor cell lines, antibacterial and antiparasitic activities, as well as regulation of platelet aggregation. Its effect on platelets is controversial, since it either induces aggregation or inhibits agonist-induced aggregation. These different effects are probably due to different experimental conditions. This Echis ocellatus (Ocellated saw-scaled viper) protein is L-amino-acid oxidase.